The chain runs to 470 residues: Putative bifunctional phosphatase/peptidyl-prolyl cis-trans isomerase (470 aa).

Catalysis depends on Asp-22, which acts as the Nucleophile. Residues Asp-22, Asp-24, and Asp-221 each coordinate Mg(2+). The PPIase cyclophilin-type domain occupies 286-468 (TGPKVTIKTN…EDVIIETIEV (183 aa)).

It in the C-terminal section; belongs to the cyclophilin-type PPIase family. PPIL1 subfamily. It depends on Mg(2+) as a cofactor.

It catalyses the reaction [protein]-peptidylproline (omega=180) = [protein]-peptidylproline (omega=0). In terms of biological role, PPIases accelerate the folding of proteins. It catalyzes the cis-trans isomerization of proline imidic peptide bonds in oligopeptides. The protein is Putative bifunctional phosphatase/peptidyl-prolyl cis-trans isomerase of Streptococcus pyogenes serotype M6 (strain ATCC BAA-946 / MGAS10394).